A 355-amino-acid chain; its full sequence is Phosphate acyltransferase (355 aa).

It belongs to the PlsX family. In terms of assembly, homodimer. Probably interacts with PlsY.

The protein resides in the cytoplasm. The enzyme catalyses a fatty acyl-[ACP] + phosphate = an acyl phosphate + holo-[ACP]. It functions in the pathway lipid metabolism; phospholipid metabolism. Functionally, catalyzes the reversible formation of acyl-phosphate (acyl-PO(4)) from acyl-[acyl-carrier-protein] (acyl-ACP). This enzyme utilizes acyl-ACP as fatty acyl donor, but not acyl-CoA. This Erythrobacter litoralis (strain HTCC2594) protein is Phosphate acyltransferase.